The chain runs to 395 residues: Cyclomarin C epoxidase CymV (395 aa).

It belongs to the cytochrome P450 family.

Its function is as follows. Cytochrome P450; part of the gene cluster that mediates the biosynthesis of cyclic heptapeptides, known as cyclomarins and also of cyclic dipeptides, called cyclomarazines, which have both antimicrobial and cytotoxic effects. First, CymD catalyzes the reverse N-prenylation of monomeric L-tryptophan with dimethylallyl diphosphate (DMAPP) to form N-(1,1-dimethylallyl)-tryptophan (r-N-DMAT). The N-(1,1-dimethylallyl)-tryptophan produced by CymD is then combined with a range of standard and nonproteinogenic amino acid substrates to synthesize the peptides, a process that is probably catalyzed by the non-canonical nonribosomal peptide synthetase (NRPS), CymA. Other proteins in the cluster catalyze further modifications of the peptides including CymV which catalyzes the oxidation of olefinic cyclomarins and cyclomarazines to their respective epoxide derivatives. The protein is Cyclomarin C epoxidase CymV of Salinispora arenicola (strain CNS-205).